The following is a 718-amino-acid chain: Sodium/myo-inositol cotransporter (718 aa).

At 1 to 9 the chain is on the extracellular side; sequence MRAVLEAAD. A helical transmembrane segment spans residues 10 to 29; the sequence is IAVVALYFILVMCIGFFAMW. At 30-38 the chain is on the cytoplasmic side; that stretch reads KSNRSTVSG. The helical transmembrane segment at 39 to 57 threads the bilayer; the sequence is YFLAGRSMTWVAIGASLFV. Topologically, residues 58 to 86 are extracellular; it reads SNIGSEHFIGLAGSGAASGFAVGAWEFNA. A helical transmembrane segment spans residues 87–110; it reads LLLLQLLGWVFIPIYIRSGVYTMP. Residues 111-123 are Cytoplasmic-facing; that stretch reads EYLSKRFGGHRIQ. A helical membrane pass occupies residues 124 to 144; sequence VYFAALSLLLYIFTKLSVDLY. The Extracellular portion of the chain corresponds to 145 to 157; it reads SGALFIQESLGWN. The chain crosses the membrane as a helical span at residues 158-183; it reads LYVSVILLIGMTALLTVTGGLVAVIY. The Cytoplasmic segment spans residues 184 to 186; the sequence is TDT. The helical transmembrane segment at 187–205 threads the bilayer; the sequence is LQALLMIIGALTLMVISMV. The Extracellular segment spans residues 206-303; the sequence is KIGGFEEVKR…HAKGSTLMAG (98 aa). Asparagine 232 carries N-linked (GlcNAc...) asparagine glycosylation. Residues 304–324 form a helical membrane-spanning segment; sequence FLKLLPMFIIVVPGMISRIVF. The Cytoplasmic portion of the chain corresponds to 325-353; that stretch reads ADEIACINPEHCMQVCGSRAGCSNIAYPR. A helical transmembrane segment spans residues 354 to 376; sequence LVMTLVPVGLRGLMMAVMIAALM. The Extracellular segment spans residues 377–406; the sequence is SDLDSIFNSASTIFTLDVYKLIRKSASSRE. The helical transmembrane segment at 407-430 threads the bilayer; the sequence is LMIVGRIFVAFMVVISIAWVPIIV. Residues 431–443 lie on the Cytoplasmic side of the membrane; sequence EMQGGQMYLYIQE. The helical transmembrane segment at 444 to 462 threads the bilayer; that stretch reads VADYLTPPVAALFLLAIFW. The Extracellular portion of the chain corresponds to 463–510; the sequence is KRCNEQGAFYGGMAGFVLGAVRLILAFTYRAPECDQPDNRPGFIKDIH. Residues 511–532 traverse the membrane as a helical segment; that stretch reads YMYVATALFWITGLITVIVSLL. The Cytoplasmic portion of the chain corresponds to 533 to 695; that stretch reads TPPPTKDQIR…QMLEETPQVK (163 aa). Phosphoserine occurs at positions 594 and 632. A helical membrane pass occupies residues 696–716; that stretch reads VILNIGLFAVCSLGIFMFVYF. Residues 717–718 are Extracellular-facing; the sequence is SL.

Belongs to the sodium:solute symporter (SSF) (TC 2.A.21) family. As to quaternary structure, interacts with KCNQ2 (via the pore module). Interacts with KCNQ1; this interaction is direct. Forms coregulatory complexes with ion channels KCNQ2-KCNQ3 and KCNQ1-KCNE2. As to expression, highly expressed in kidney, placenta, and brain and at a lesser extent in thymus, lung, bladder, and testes. Expressed in the choroid plexus epithelium (at protein level).

Its subcellular location is the apical cell membrane. It localises to the basolateral cell membrane. The catalysed reaction is myo-inositol(out) + 2 Na(+)(out) = myo-inositol(in) + 2 Na(+)(in). It catalyses the reaction scyllo-inositol(out) + 2 Na(+)(out) = scyllo-inositol(in) + 2 Na(+)(in). Functionally, electrogenic Na(+)-coupled sugar symporter that actively transports myo-inositol and its stereoisomer scyllo-inositol across the plasma membrane, with a Na(+) to sugar coupling ratio of 2:1. Maintains myo-inositol concentration gradient that defines cell volume and fluid balance during osmotic stress, in particular in the fetoplacental unit and central nervous system. Forms coregulatory complexes with voltage-gated K(+) ion channels, allosterically altering ion selectivity, voltage dependence and gating kinetics of the channel. In turn, K(+) efflux through the channel forms a local electrical gradient that modulates electrogenic Na(+)-coupled myo-inositol influx through the transporter. Associates with KCNQ1-KCNE2 channel in the apical membrane of choroid plexus epithelium and regulates the myo-inositol gradient between blood and cerebrospinal fluid with an impact on neuron excitability. Associates with KCNQ2-KCNQ3 channel altering ion selectivity, increasing Na(+) and Cs(+) permeation relative to K(+) permeation. Provides myo-inositol precursor for biosynthesis of phosphoinositides such as PI(4,5)P2, thus indirectly affecting the activity of phosphoinositide-dependent ion channels and Ca(2+) signaling upon osmotic stress. (Microbial infection) Functions as a retroviral receptor for M813 murine leukemia virus (MuLV) entry. In Mus musculus (Mouse), this protein is Sodium/myo-inositol cotransporter (Slc5a3).